Here is a 92-residue protein sequence, read N- to C-terminus: Long neurotoxin 2 (92 aa).

The first 21 residues, 1–21 (MKTLLLTLVVVTIVCLDLGYT), serve as a signal peptide directing secretion. 5 disulfides stabilise this stretch: Cys-24–Cys-42, Cys-35–Cys-63, Cys-48–Cys-52, Cys-67–Cys-79, and Cys-80–Cys-85.

Belongs to the three-finger toxin family. Long-chain subfamily. Type II alpha-neurotoxin sub-subfamily. As to expression, expressed by the venom gland.

The protein localises to the secreted. Functionally, binds with high affinity to muscular (alpha-1/CHRNA1) and neuronal (alpha-7/CHRNA7) nicotinic acetylcholine receptor (nAChR) and inhibits acetylcholine from binding to the receptor, thereby impairing neuromuscular and neuronal transmission. The polypeptide is Long neurotoxin 2 (Oxyuranus microlepidotus (Inland taipan)).